Reading from the N-terminus, the 232-residue chain is Orotidine 5'-phosphate decarboxylase (232 aa).

Substrate is bound by residues aspartate 13, lysine 35, 62–71 (DLKFHDIPNT), threonine 122, arginine 182, glutamine 191, glycine 211, and arginine 212. Catalysis depends on lysine 64, which acts as the Proton donor.

It belongs to the OMP decarboxylase family. Type 1 subfamily. In terms of assembly, homodimer.

The enzyme catalyses orotidine 5'-phosphate + H(+) = UMP + CO2. It participates in pyrimidine metabolism; UMP biosynthesis via de novo pathway; UMP from orotate: step 2/2. Functionally, catalyzes the decarboxylation of orotidine 5'-monophosphate (OMP) to uridine 5'-monophosphate (UMP). The polypeptide is Orotidine 5'-phosphate decarboxylase (Pseudomonas syringae pv. tomato (strain ATCC BAA-871 / DC3000)).